Reading from the N-terminus, the 112-residue chain is Cytoplasmic envelopment protein 3 (112 aa).

Gly2 carries N-myristoyl glycine; by host lipidation. The disordered stretch occupies residues 84–112; it reads GANKGGGKRTSSLKSAKNGAGVKKKVRAL.

Belongs to the herpesviridae cytoplasmic envelopment protein 3 family. As to quaternary structure, interacts with cytoplasmic envelopment protein 2; this interaction is essential for the proper localization of each protein to the assembly complex and thus for the production of infectious virus. In terms of processing, myristoylation and palmitoylation (probably on one or more of the nearby cysteines at the N-terminus) enable membrane-binding and Golgi apparatus-specific targeting and are essential for efficient packaging. Phosphorylated. Phosphorylation does not seem to be required for recycling to the host Golgi apparatus. Packaging is selective for underphosphorylated forms.

It is found in the virion tegument. It localises to the virion membrane. The protein localises to the host cell membrane. Its subcellular location is the host Golgi apparatus membrane. Functionally, plays an important role in the cytoplasmic envelopment of tegument proteins and capsids during the assembly and egress processes. Also participates in viral entry at the fusion step probably by regulating the core fusion machinery. The chain is Cytoplasmic envelopment protein 3 (UL99) from Murid herpesvirus 1 (strain K181) (MuHV-1).